Reading from the N-terminus, the 494-residue chain is Neuronal acetylcholine receptor subunit alpha-6 (494 aa).

The first 31 residues, 1–31, serve as a signal peptide directing secretion; sequence MHPKRRLCWCLPASGAWAFMLTSLIADTTAC. Over 32–240 the chain is Extracellular; it reads ESEERLFHKL…TYSFYIRRLP (209 aa). 2 N-linked (GlcNAc...) asparagine glycosylation sites follow: Asn54 and Asn171. A disulfide bond links Cys158 and Cys172. Transmembrane regions (helical) follow at residues 241 to 265, 272 to 290, and 306 to 327; these read MFYTINLIIPCLFISFLTVLVFYLP, VTLCISVLLSLTVFLLVIT, and YLLFTMIFVTLSIVITVFVLNI. Residues 328-468 are Cytoplasmic-facing; the sequence is HYRTPTTHTM…WKYVAMVIDR (141 aa). Residues 364-390 form a disordered region; sequence KNISKKTKKGSAKTSGKSKHSKHKDNK. The segment covering 366–390 has biased composition (basic residues); it reads ISKKTKKGSAKTSGKSKHSKHKDNK. A helical membrane pass occupies residues 469–489; the sequence is VFLWVFIILCVFGTAGLFIQP.

It belongs to the ligand-gated ion channel (TC 1.A.9) family. Acetylcholine receptor (TC 1.A.9.1) subfamily. Alpha-6/CHRNA6 sub-subfamily. In terms of assembly, neuronal AChR is composed of two different types of subunits: alpha and non-alpha (beta). CHRNA6/alpha-6 subunit can be combined to CHRNB2/beta-2, CHRNA4/alpha-4 and CHRNB3/beta-3 to give rise to functional receptors. Heteropentamers containing CHRNB3 have an stoichiometry of (CHRNA6:CHRNB2)2:CHRNB3. Interacts with LYPD6.

The protein resides in the synaptic cell membrane. It carries out the reaction K(+)(in) = K(+)(out). The enzyme catalyses Na(+)(in) = Na(+)(out). It catalyses the reaction Ca(2+)(in) = Ca(2+)(out). Its activity is regulated as follows. Activated by a myriad of ligands such as acetylcholine, cytisine and nicotine. CHRNA6 nAChR activity is inhibited by the antagonists alpha-conotoxin MII and PIA, a small disulfide-constrained peptides from cone snails. Its function is as follows. Component of neuronal acetylcholine receptors (nAChRs) that function as pentameric, ligand-gated cation channels with high calcium permeability among other activities. nAChRs are excitatory neurotrasnmitter receptors formed by a collection of nAChR subunits known to mediate synaptic transmission in the nervous system and the neuromuscular junction. Each nAchR subunit confers differential attributes to channel properties, including activation, deactivation and desensitization kinetics, pH sensitivity, cation permeability, and binding to allosteric modulators. CHRNA6 forms pentameric channels with CHRNB2 and CHRNA4 that exhibit high sensitivity to ACh and nicotine and are predominantly expressed in only a few brain areas, including dopaminergic neurons, norepirephrine neurons and cells of the visual system. nAChrs containing CHRNA6 subunits mediate endogenous cholinergic modulation of dopamine and gamma-aminobutyric acid (GABA) release in response to nicotine at nerve terminals. Functionally, component of neuronal acetylcholine receptors (nAChRs) that function as pentameric, ligand-gated cation channels with high calcium permeability among other activities. nAChRs are excitatory neurotrasnmitter receptors formed by a collection of nAChR subunits known to mediate synaptic transmission in the nervous system and the neuromuscular junction. Each nAchR subunit confers differential attributes to channel properties, including activation, deactivation and desensitization kinetics, pH sensitivity, cation permeability, and binding to allosteric modulators. CHRNA6 forms pentameric channels with CHRNB2, CHRNB3 and CHRNA4 that exhibit high sensitivity to ACh and nicotine and are predominantly expressed in only a few brain areas, including dopaminergic neurons, norepirephrine neurons and cells of the visual system. nAChrs containing CHRNA6 subunits mediate endogenous cholinergic modulation of dopamine and gamma-aminobutyric acid (GABA) release in response to nicotine at nerve terminals. The sequence is that of Neuronal acetylcholine receptor subunit alpha-6 (CHRNA6) from Gallus gallus (Chicken).